Consider the following 601-residue polypeptide: DDB1- and CUL4-associated factor 8 (601 aa).

Composition is skewed to polar residues over residues 1–24 and 46–60; these read MSFS…SSPE and VSLS…TTQA. The disordered stretch occupies residues 1–150; it reads MSFSGEMSNG…DWLISEKTPL (150 aa). The short motif at 39 to 50 is the Nuclear export signal element; the sequence is IEVEASDVSLSL. Over residues 61-99 the composition is skewed to basic and acidic residues; that stretch reads ESRDSCSETSGEDKDSDSMDDTGHYSINDENRGNDQSHS. Residues 94 to 131 are a coiled coil; the sequence is NDQSHSEDEEEEEEEDEEEEAVRHRKRAQRKRANRDQE. Over residues 100 to 113 the composition is skewed to acidic residues; it reads EDEEEEEEEDEEEE. Basic residues predominate over residues 116 to 126; sequence RHRKRAQRKRA. Residues 127–140 are compositionally biased toward basic and acidic residues; the sequence is NRDQESSDEERALD. WD repeat units follow at residues 194 to 233, 237 to 278, 284 to 324, 332 to 372, 388 to 427, 435 to 475, and 479 to 519; these read GHSG…PVLE, GHKS…CCKN, QHKG…PASR, ESKV…ENVN, EAKA…GAEY, RNNA…IVQF, and DKGG…TELD. The disordered stretch occupies residues 561–601; it reads RRRRRDAGLGAGDAESDDSPSSSDSSDDDEDGPDRVQCIPS.

The protein belongs to the WD repeat DCAF8 family.

It is found in the nucleus. It localises to the cytoplasm. This chain is DDB1- and CUL4-associated factor 8 (dcaf8), found in Xenopus laevis (African clawed frog).